The primary structure comprises 1670 residues: Protein TASOR (1670 aa).

Residues 1 to 110 (MATAVETEAC…QIPRKSREKK (110 aa)) form a disordered region. An N-acetylalanine modification is found at Ala2. A compositionally biased stretch (polar residues) spans 67–78 (QSLSHEQPQDSS). Ser344 bears the Phosphoserine mark. Residue Lys586 forms a Glycyl lysine isopeptide (Lys-Gly) (interchain with G-Cter in SUMO2) linkage. Phosphoserine occurs at positions 633, 636, 673, and 800. Residues Lys823 and Lys832 each participate in a glycyl lysine isopeptide (Lys-Gly) (interchain with G-Cter in SUMO2) cross-link. Phosphoserine is present on Ser843. Lys872 is covalently cross-linked (Glycyl lysine isopeptide (Lys-Gly) (interchain with G-Cter in SUMO2)). The disordered stretch occupies residues 921–947 (TGGNARSPEDQLGKHGEKQTPGMKSPE). Residues Ser927, Ser971, and Ser979 each carry the phosphoserine modification. A compositionally biased stretch (basic and acidic residues) spans 927 to 938 (SPEDQLGKHGEK). 2 positions are modified to phosphothreonine: Thr982 and Thr1049. Ser1103 bears the Phosphoserine mark. Positions 1532 to 1545 (ETKGSRGTDQKKNT) are enriched in basic and acidic residues. 2 disordered regions span residues 1532-1558 (ETKG…VQNS) and 1638-1670 (FLSA…SQEK). Polar residues-rich tracts occupy residues 1546 to 1558 (QIEL…VQNS) and 1659 to 1670 (KSDSSRPYSQEK). Ser1552 is subject to Phosphoserine.

The protein belongs to the TASOR family. Component of the HUSH complex; at least composed of TASOR, PPHLN1 and MPHOSPH8. Interacts with MORC2; the interaction associateS MORC2 with the HUSH complex which recruits MORC2 to heterochromatic loci. Interacts with ZNF638; leading to recruitment of the HUSH complex to unintegrated retroviral DNA. Interacts with INPP5A, EML1, SV1L, GPSM2, ITGB3BP, CNTN1, ETFA, PSMD8, S100A10, MPHOSPH8, TMEM100, ALB, PARPBP, HCFC2, NCBP1 and SETDB1.

It is found in the nucleus. It localises to the chromosome. In terms of biological role, component of the HUSH complex, a multiprotein complex that mediates epigenetic repression. The HUSH complex is recruited to genomic loci rich in H3K9me3 and is required to maintain transcriptional silencing by promoting recruitment of SETDB1, a histone methyltransferase that mediates further deposition of H3K9me3, as well as MORC2. Also represses L1 retrotransposons in collaboration with MORC2 and, probably, SETDB1, the silencing is dependent of repressive epigenetic modifications, such as H3K9me3 mark. Silencing events often occur within introns of transcriptionally active genes, and lead to the down-regulation of host gene expression. The HUSH complex is also involved in the silencing of unintegrated retroviral DNA by being recruited by ZNF638: some part of the retroviral DNA formed immediately after infection remains unintegrated in the host genome and is transcriptionally repressed. Plays a crucial role in early embryonic development. Involved in the organization of spindle poles and spindle apparatus assembly during zygotic division. Plays an important role in maintaining epiblast fitness or potency. In Homo sapiens (Human), this protein is Protein TASOR.